We begin with the raw amino-acid sequence, 350 residues long: Legumin K (350 aa).

Disordered regions lie at residues 37–86 (LGGN…GNSV) and 102–170 (EEDT…RKNG). Composition is skewed to basic and acidic residues over residues 104 to 118 (DTAK…ERSQ), 141 to 150 (EQSHSHSHRE), and 160 to 170 (EKQRSEERKNG). The region spanning 182-329 (ENIADAAGAD…AFGLRQRQVT (148 aa)) is the Cupin type-1 domain.

This sequence belongs to the 11S seed storage protein (globulins) family. Hexamer; each subunit is composed of an acidic and a basic chain derived from a single precursor and linked by a disulfide bond.

Functionally, this protein found in the seeds of many leguminous and non-leguminous plants is the source of sulfur-containing amino acids in seed meals. This chain is Legumin K (LEGK), found in Pisum sativum (Garden pea).